Reading from the N-terminus, the 174-residue chain is Thiol-disulfide oxidoreductase ResA (174 aa).

Residues 11 to 30 (TAILLVLLAAIGYTIYTNFF) traverse the membrane as a helical; Signal-anchor for type II membrane protein segment. The Thioredoxin domain maps to 36 to 174 (VAVGSTAPDF…IERHLESIKP (139 aa)). Residues Cys74 and Cys77 are joined by a disulfide bond.

The protein belongs to the thioredoxin family. ResA subfamily.

It is found in the cell membrane. It functions in the pathway protein modification; cytochrome c assembly. Its function is as follows. Thiol-disulfide oxidoreductase which is required in disulfide reduction during c-type cytochrome synthesis. May accept reducing equivalents from CcdA, leading to breakage of disulfide bonds in apocytochrome c; following this reduction heme can be covalently attached. This Geobacillus kaustophilus (strain HTA426) protein is Thiol-disulfide oxidoreductase ResA.